The chain runs to 222 residues: Thiopurine S-methyltransferase (222 aa).

4 residues coordinate S-adenosyl-L-methionine: W10, L45, E66, and R123.

It belongs to the class I-like SAM-binding methyltransferase superfamily. TPMT family.

It localises to the cytoplasm. It carries out the reaction S-adenosyl-L-methionine + a thiopurine = S-adenosyl-L-homocysteine + a thiopurine S-methylether.. In Pseudomonas fluorescens (strain ATCC BAA-477 / NRRL B-23932 / Pf-5), this protein is Thiopurine S-methyltransferase.